A 691-amino-acid polypeptide reads, in one-letter code: Lacticin-481/lactococcin-DR transport/processing ATP-binding protein lcnDR3 (691 aa).

One can recognise a Peptidase C39 domain in the interval 6–130 (QNNEQDCLLA…KKFSGYIITL (125 aa)). Cys12 is a catalytic residue. The ABC transmembrane type-1 domain maps to 158–434 (TFLYIFSLFI…IQDVMFEISR (277 aa)). A run of 5 helical transmembrane segments spans residues 159 to 179 (FLYI…SIIL), 189 to 209 (ITYS…SLLM), 262 to 284 (GILL…IIYL), 289 to 311 (FTLT…SLIS), and 385 to 405 (ICVI…LVSI). Residues 464 to 689 (IILKDISYSY…LLNDSYNSFV (226 aa)) form the ABC transporter domain. Residue 497–504 (GKSGSGKS) coordinates ATP.

Belongs to the ABC transporter superfamily.

It localises to the cell membrane. Probably implicated in the export process of the lantibiotic lacticin-481/lactococcin-DR. The chain is Lacticin-481/lactococcin-DR transport/processing ATP-binding protein lcnDR3 (lcnDR3) from Lactococcus lactis subsp. lactis (Streptococcus lactis).